Reading from the N-terminus, the 609-residue chain is Phosphoenolpyruvate carboxykinase [GTP] (609 aa).

Substrate-binding positions include Arg81 and 220-222 (YGG). Mn(2+) contacts are provided by Lys229 and His249. Ser271 contacts substrate. Residue 272 to 277 (ACGKTN) participates in GTP binding. Cys273 is a catalytic residue. Asp296 serves as a coordination point for Mn(2+). 387–389 (NSR) is a binding site for substrate. GTP is bound by residues Arg389, Arg420, and 515 to 518 (FGEN).

Belongs to the phosphoenolpyruvate carboxykinase [GTP] family. Monomer. The cofactor is Mn(2+).

The protein resides in the cytoplasm. The enzyme catalyses oxaloacetate + GTP = phosphoenolpyruvate + GDP + CO2. The protein operates within carbohydrate biosynthesis; gluconeogenesis. Its function is as follows. Catalyzes the conversion of oxaloacetate (OAA) to phosphoenolpyruvate (PEP), the rate-limiting step in the metabolic pathway that produces glucose from lactate and other precursors derived from the citric acid cycle. The sequence is that of Phosphoenolpyruvate carboxykinase [GTP] from Mycolicibacterium paratuberculosis (strain ATCC BAA-968 / K-10) (Mycobacterium paratuberculosis).